A 714-amino-acid polypeptide reads, in one-letter code: DNA ligase (714 aa).

NAD(+) contacts are provided by residues 40 to 44 (DADYD), 90 to 91 (SL), and Glu124. The N6-AMP-lysine intermediate role is filled by Lys126. 4 residues coordinate NAD(+): Arg147, Glu183, Lys304, and Lys328. Zn(2+) is bound by residues Cys420, Cys423, Cys438, and Cys444. Residues 634 to 714 (TRDSEVSGKT…EWAAIVAAAG (81 aa)) form the BRCT domain.

It belongs to the NAD-dependent DNA ligase family. LigA subfamily. Mg(2+) serves as cofactor. Mn(2+) is required as a cofactor.

The catalysed reaction is NAD(+) + (deoxyribonucleotide)n-3'-hydroxyl + 5'-phospho-(deoxyribonucleotide)m = (deoxyribonucleotide)n+m + AMP + beta-nicotinamide D-nucleotide.. In terms of biological role, DNA ligase that catalyzes the formation of phosphodiester linkages between 5'-phosphoryl and 3'-hydroxyl groups in double-stranded DNA using NAD as a coenzyme and as the energy source for the reaction. It is essential for DNA replication and repair of damaged DNA. The protein is DNA ligase of Sphingopyxis alaskensis (strain DSM 13593 / LMG 18877 / RB2256) (Sphingomonas alaskensis).